A 78-amino-acid polypeptide reads, in one-letter code: Large ribosomal subunit protein bL28 (78 aa).

Residues 1–20 are disordered; sequence MSRVCQVTGKGPVTGNNISH.

The protein belongs to the bacterial ribosomal protein bL28 family.

The protein is Large ribosomal subunit protein bL28 of Azotobacter vinelandii (strain DJ / ATCC BAA-1303).